We begin with the raw amino-acid sequence, 404 residues long: Argininosuccinate synthase (404 aa).

Residues 10–18 and Ala37 each bind ATP; that span reads AYSGGLDTS. Positions 90 and 95 each coordinate L-citrulline. Residue Gly120 participates in ATP binding. 3 residues coordinate L-aspartate: Thr122, Asn126, and Asp127. Asn126 serves as a coordination point for L-citrulline. Residues Arg130, Ser180, Ser189, Glu265, and Tyr277 each coordinate L-citrulline.

This sequence belongs to the argininosuccinate synthase family. Type 1 subfamily. Homotetramer.

Its subcellular location is the cytoplasm. The catalysed reaction is L-citrulline + L-aspartate + ATP = 2-(N(omega)-L-arginino)succinate + AMP + diphosphate + H(+). It participates in amino-acid biosynthesis; L-arginine biosynthesis; L-arginine from L-ornithine and carbamoyl phosphate: step 2/3. The chain is Argininosuccinate synthase from Helicobacter hepaticus (strain ATCC 51449 / 3B1).